The chain runs to 472 residues: 2-amino-4-ketopentanoate thiolase beta subunit (472 aa).

N6-(pyridoxal phosphate)lysine is present on Lys-102. Residues Asn-128 and 238-242 contribute to the pyridoxal 5'-phosphate site; that span reads AGGGN.

It belongs to the threonine synthase family. In terms of assembly, heterodimer with OrtA. Pyridoxal 5'-phosphate serves as cofactor.

The catalysed reaction is D-alanine + acetyl-CoA = (2R)-2-amino-4-oxopentanoate + CoA. Functionally, involved in the ornithine fermentation pathway. Catalyzes the thiolytic cleavage of 2-amino-4-ketopentanoate (AKP) with coenzyme A (CoA) to form acetyl-CoA and alanine. It is strictly specific for AKP. This is 2-amino-4-ketopentanoate thiolase beta subunit from Unknown prokaryotic organism.